The primary structure comprises 256 residues: MAFTLTNKNVIFVAGLGGIGLDTSKELVKRDLKNLVILDRIENPAAIAELKAINPKVTVTFYPYDVTVPIAETSKLLKTIFAKLTTVDVLINGAGILDDYQIERTIAVNYTGLVNTTTAILDFWDKRKGGPGGIICNIGSVTGFNAIYQVPVYSGTKAAVVNFTSSLAKLAPITGVTAYTVNPGITRTTLVHKFNSWLDVEPQVAEKLLAHPTQTSLSCAENFVKAIELNENGAIWKLDLGTLEAIQWSKHWDSGI.

12-35 (FVAGLGGIGLDTSKELVKRDLKNL) serves as a coordination point for NAD(+). Ser-140 serves as a coordination point for substrate. The active-site Proton acceptor is Tyr-153.

The protein belongs to the short-chain dehydrogenases/reductases (SDR) family. Homodimer.

The catalysed reaction is a primary alcohol + NAD(+) = an aldehyde + NADH + H(+). It catalyses the reaction a secondary alcohol + NAD(+) = a ketone + NADH + H(+). The polypeptide is Alcohol dehydrogenase (Adh) (Drosophila erecta (Fruit fly)).